The sequence spans 618 residues: Chaperone protein dnaK (618 aa).

The tract at residues 595 to 618 (SKTETTTPNKNEEDVIDASFSEEK) is disordered.

Belongs to the heat shock protein 70 family.

It localises to the plastid. The protein localises to the cyanelle. Functionally, acts as a chaperone. The chain is Chaperone protein dnaK (dnaK-A) from Cyanophora paradoxa.